The following is a 235-amino-acid chain: Chaperone protein TorD (235 aa).

It belongs to the TorD/DmsD family. TorD subfamily.

Its subcellular location is the cytoplasm. In terms of biological role, involved in the biogenesis of TorA. Acts on TorA before the insertion of the molybdenum cofactor and, as a result, probably favors a conformation of the apoenzyme that is competent for acquiring the cofactor. The chain is Chaperone protein TorD from Shewanella amazonensis (strain ATCC BAA-1098 / SB2B).